Reading from the N-terminus, the 129-residue chain is Large ribosomal subunit protein bL12 (129 aa).

The interval 94 to 113 (TEGLPKTVKEKTSKSDAEDT) is disordered.

Belongs to the bacterial ribosomal protein bL12 family. In terms of assembly, homodimer. Part of the ribosomal stalk of the 50S ribosomal subunit. Forms a multimeric L10(L12)X complex, where L10 forms an elongated spine to which 2 to 4 L12 dimers bind in a sequential fashion. Binds GTP-bound translation factors.

Forms part of the ribosomal stalk which helps the ribosome interact with GTP-bound translation factors. Is thus essential for accurate translation. The protein is Large ribosomal subunit protein bL12 of Chlamydia pneumoniae (Chlamydophila pneumoniae).